A 318-amino-acid chain; its full sequence is Homoserine kinase (318 aa).

97 to 107 lines the ATP pocket; it reads PIGSGLGSSAC.

Belongs to the GHMP kinase family. Homoserine kinase subfamily.

The protein localises to the cytoplasm. The enzyme catalyses L-homoserine + ATP = O-phospho-L-homoserine + ADP + H(+). The protein operates within amino-acid biosynthesis; L-threonine biosynthesis; L-threonine from L-aspartate: step 4/5. Functionally, catalyzes the ATP-dependent phosphorylation of L-homoserine to L-homoserine phosphate. The chain is Homoserine kinase from Vibrio cholerae serotype O1 (strain M66-2).